A 95-amino-acid chain; its full sequence is MRKYEIMYIIAPNLEEAANKEIIERFNGVLTNQGAEIEKVEEMGKRRLAYEINKFREGYYVLLNVKADADAIAEFNRLIKINDNVIRVLITKDEE.

It belongs to the bacterial ribosomal protein bS6 family.

In terms of biological role, binds together with bS18 to 16S ribosomal RNA. The chain is Small ribosomal subunit protein bS6 (rpsF) from Halalkalibacterium halodurans (strain ATCC BAA-125 / DSM 18197 / FERM 7344 / JCM 9153 / C-125) (Bacillus halodurans).